Here is a 323-residue protein sequence, read N- to C-terminus: Phospho-N-acetylmuramoyl-pentapeptide-transferase (323 aa).

A run of 9 helical transmembrane segments spans residues 3 to 23 (NILL…PALI), 52 to 72 (MGGL…SWVL), 77 to 97 (MLPT…LGMW), 121 to 141 (IVGA…MALH), 145 to 165 (IGNW…LVGF), 175 to 195 (LDGL…IVAW), 200 to 220 (INIA…LIFN), 226 to 248 (IFMG…ILLH), and 301 to 321 (IDLT…WVIL).

It belongs to the glycosyltransferase 4 family. MraY subfamily. Mg(2+) is required as a cofactor.

Its subcellular location is the cell membrane. It catalyses the reaction UDP-N-acetyl-alpha-D-muramoyl-L-alanyl-gamma-D-glutamyl-L-lysyl-D-alanyl-D-alanine + di-trans,octa-cis-undecaprenyl phosphate = Mur2Ac(oyl-L-Ala-gamma-D-Glu-L-Lys-D-Ala-D-Ala)-di-trans,octa-cis-undecaprenyl diphosphate + UMP. It functions in the pathway cell wall biogenesis; peptidoglycan biosynthesis. Its function is as follows. Catalyzes the initial step of the lipid cycle reactions in the biosynthesis of the cell wall peptidoglycan: transfers peptidoglycan precursor phospho-MurNAc-pentapeptide from UDP-MurNAc-pentapeptide onto the lipid carrier undecaprenyl phosphate, yielding undecaprenyl-pyrophosphoryl-MurNAc-pentapeptide, known as lipid I. In Levilactobacillus brevis (strain ATCC 367 / BCRC 12310 / CIP 105137 / JCM 1170 / LMG 11437 / NCIMB 947 / NCTC 947) (Lactobacillus brevis), this protein is Phospho-N-acetylmuramoyl-pentapeptide-transferase.